The sequence spans 2804 residues: Nipped-B-like protein (2804 aa).

Polar residues-rich tracts occupy residues leucine 128–proline 173 and histidine 191–serine 208. The interval leucine 128–glutamate 340 is disordered. Serine 150 and serine 162 each carry phosphoserine. Residues histidine 234 to histidine 249 show a composition bias toward basic and acidic residues. Phosphoserine is present on residues serine 243, serine 256, serine 274, serine 280, serine 284, serine 301, serine 306, and serine 318. Basic and acidic residues predominate over residues leucine 331 to glutamate 340. The residue at position 350 (serine 350) is a Phosphoserine. The span at arginine 482 to lysine 500 shows a compositional bias: basic and acidic residues. The disordered stretch occupies residues arginine 482–leucine 946. The span at proline 523–glycine 534 shows a compositional bias: polar residues. Basic and acidic residues-rich tracts occupy residues aspartate 562–glutamine 572, proline 593–glutamine 663, lysine 672–aspartate 685, and glutamate 694–alanine 939. Threonine 713 and threonine 746 each carry phosphothreonine. Serine 912 is modified (phosphoserine). A PxVxL motif motif is present at residues asparagine 996–serine 1009. Disordered regions lie at residues isoleucine 1017 to valine 1047 and glutamate 1060 to glutamate 1191. N6-acetyllysine is present on lysine 1082. A phosphoserine mark is found at serine 1089, serine 1090, and serine 1096. Residues serine 1089 to phenylalanine 1100 are compositionally biased toward acidic residues. Positions lysine 1109–arginine 1139 are enriched in basic and acidic residues. A phosphoserine mark is found at serine 1150, serine 1152, and serine 1154. Phosphotyrosine is present on tyrosine 1159. Serine 1160 is modified (phosphoserine). The segment covering lysine 1171–lysine 1182 has biased composition (basic residues). At threonine 1189 the chain carries Phosphothreonine. Phosphoserine is present on serine 1197. Residues alanine 1691–isoleucine 1710 form a disordered region. HEAT repeat units lie at residues alanine 1767–serine 1805, proline 1843–threonine 1881, tyrosine 1945–lysine 1984, valine 2227–methionine 2267, and leucine 2313–glycine 2351. The span at valine 2473–glutamate 2489 shows a compositional bias: basic and acidic residues. Disordered regions lie at residues valine 2473–asparagine 2520 and threonine 2651–glutamate 2696. Phosphoserine occurs at positions 2493, 2509, 2511, 2513, 2515, 2652, and 2658. Over residues aspartate 2510–isoleucine 2519 the composition is skewed to acidic residues. The residue at position 2667 (threonine 2667) is a Phosphothreonine. Serine 2672 bears the Phosphoserine mark.

The protein belongs to the SCC2/Nipped-B family. In terms of assembly, heterodimerizes with MAU2/SCC4 to form the cohesin loading complex. The NIPBL-MAU2 heterodimer interacts with the cohesin complex composed of SMC1A/B and SMC3 heterodimer, RAD21 and STAG1/SA1. NIPBL directly contacts all members of the complex, RAD21, SMC1A/B, SMC3 and STAG1. Interacts directly (via PxVxL motif) with CBX5. Interacts with ZNF609 (via N-terminus). Interacts with the multiprotein complex Integrator. Interacts (via PxVxL motif) with CBX3. Interacts with BRD4. As to expression, widely expressed. Highly expressed in heart, skeletal muscle, fetal and adult liver, fetal and adult kidney. Expressed at intermediates level in thymus, placenta, peripheral leukocyte and small intestine. Weakly or not expressed in brain, colon, spleen and lung.

It is found in the nucleus. Its subcellular location is the chromosome. Plays an important role in the loading of the cohesin complex on to DNA. Forms a heterodimeric complex (also known as cohesin loading complex) with MAU2/SCC4 which mediates the loading of the cohesin complex onto chromatin. Plays a role in cohesin loading at sites of DNA damage. Its recruitment to double-strand breaks (DSBs) sites occurs in a CBX3-, RNF8- and RNF168-dependent manner whereas its recruitment to UV irradiation-induced DNA damage sites occurs in a ATM-, ATR-, RNF8- and RNF168-dependent manner. Along with ZNF609, promotes cortical neuron migration during brain development by regulating the transcription of crucial genes in this process. Preferentially binds promoters containing paused RNA polymerase II. Up-regulates the expression of SEMA3A, NRP1, PLXND1 and GABBR2 genes, among others. This chain is Nipped-B-like protein (NIPBL), found in Homo sapiens (Human).